A 679-amino-acid polypeptide reads, in one-letter code: Methionine--tRNA ligase (679 aa).

Positions 14 to 24 (PYANGSIHLGH) match the 'HIGH' region motif. Zn(2+)-binding residues include C145, C148, C158, and C161. The short motif at 331–335 (KMSKS) is the 'KMSKS' region element. ATP is bound at residue K334. One can recognise a tRNA-binding domain in the interval 577 to 679 (TFAAVDLRVA…SGAKPGQRIK (103 aa)).

This sequence belongs to the class-I aminoacyl-tRNA synthetase family. MetG type 1 subfamily. Homodimer. Zn(2+) is required as a cofactor.

Its subcellular location is the cytoplasm. It carries out the reaction tRNA(Met) + L-methionine + ATP = L-methionyl-tRNA(Met) + AMP + diphosphate. In terms of biological role, is required not only for elongation of protein synthesis but also for the initiation of all mRNA translation through initiator tRNA(fMet) aminoacylation. The polypeptide is Methionine--tRNA ligase (Pseudomonas putida (strain GB-1)).